Reading from the N-terminus, the 1013-residue chain is AP-2 complex subunit alpha-2 (1013 aa).

HEAT repeat units lie at residues 254–289 (AMRA…VVKN), 354–391 (DIIK…VSNA), 393–430 (DIVE…DLSW), and 521–565 (TVST…CIDV). Residues 652–676 (STDPESVARSLSHPNGTLSNIDPQT) are disordered. Positions 663–675 (SHPNGTLSNIDPQ) are enriched in polar residues. The GAE domain maps to 742-841 (ALCLKDSGVL…LDFSYKFGTN (100 aa)). The interval 760–1013 (GIKAEWRGHH…DPGAMLAGLL (254 aa)) is required for AP180 binding.

It belongs to the adaptor complexes large subunit family. Adaptor protein complex 2 (AP-2) is a heterotetramer composed of two large adaptins (alpha-type and beta-type subunits), a medium adaptin (mu-type subunit) and a small adaptin (sigma-type subunit). Interacts with AP180.

The protein resides in the membrane. It localises to the coated pit. Its function is as follows. Subunit of the adaptor protein complex 2 (AP-2). Adaptor protein complexes function in protein transport via transport vesicles in different membrane traffic pathways. Adaptor protein complexes are vesicle coat components and appear to be involved in cargo selection and vesicle formation. AP-2 is involved in clathrin-dependent endocytosis in which cargo proteins are incorporated into vesicles surrounded by clathrin (clathrin-coated vesicles, CCVs) which are destined for fusion with the early endosome. The complex binds polyphosphoinositides. This is AP-2 complex subunit alpha-2 (ALPHAC-AD) from Arabidopsis thaliana (Mouse-ear cress).